The sequence spans 132 residues: Putative nickel-responsive regulator (132 aa).

Ni(2+) is bound by residues His77, His88, His90, and Cys96.

This sequence belongs to the transcriptional regulatory CopG/NikR family. It depends on Ni(2+) as a cofactor.

In terms of biological role, transcriptional regulator. The polypeptide is Putative nickel-responsive regulator (Brucella abortus (strain S19)).